The chain runs to 242 residues: Floral homeotic protein AGAMOUS (242 aa).

An MADS-box domain is found at 19 to 73 (RGKIEIKRIENTTNRQVTFCKRRNGLLKKAYELSVLCDAEVALIVFSSRGRLYEY). The 91-residue stretch at 103-193 (AQYYQQEASK…RAKIAETERS (91 aa)) folds into the K-box domain.

Expressed exclusively in stamens and carpels.

It is found in the nucleus. Functionally, probable transcription factor involved in regulating genes that determines stamen and carpel development in wild-type flowers. This Petunia hybrida (Petunia) protein is Floral homeotic protein AGAMOUS (AG1).